The following is a 595-amino-acid chain: Alginate biosynthesis sensor protein KinB (595 aa).

Residues M1 to R12 are Cytoplasmic-facing. The chain crosses the membrane as a helical span at residues L13–F33. Over S34 to R167 the chain is Periplasmic. The helical transmembrane segment at A168–V188 threads the bilayer. The Cytoplasmic portion of the chain corresponds to T189–V595. Positions R195–K247 constitute an HAMP domain. Residues R258–V323 enclose the PAS domain. The region spanning A327–Q369 is the PAC domain. One can recognise a Histidine kinase domain in the interval R382–V595. At H385 the chain carries Phosphohistidine; by autocatalysis.

In terms of processing, autophosphorylated.

It localises to the cell inner membrane. The enzyme catalyses ATP + protein L-histidine = ADP + protein N-phospho-L-histidine.. Member of the two-component regulatory system AlgB/KinB involved in regulation of alginate biosynthesis genes. KinB functions as a membrane-associated protein kinase that phosphorylates AlgB, probably in response to environmental signals. This Pseudomonas aeruginosa protein is Alginate biosynthesis sensor protein KinB (kinB).